The primary structure comprises 164 residues: MAETKATLTNRLLAVKHNSGKSYSEIAEETGLTNVYVAQLFRRQAQLKPDTALKLRAVLPELSDELLGEMMRPPMRSYDPNLIQEPSVYRLNEAVMHFGESIKEIINEEFGDGIMSAIDFYCSVDKVKGVDGKDRVVVTFDGKYLPYSEQKTEHMVSRLRQNGN.

Catalysis depends on residues R90, E93, and S116.

The protein belongs to the cyanase family.

It catalyses the reaction cyanate + hydrogencarbonate + 3 H(+) = NH4(+) + 2 CO2. Functionally, catalyzes the reaction of cyanate with bicarbonate to produce ammonia and carbon dioxide. The protein is Cyanate hydratase of Ricinus communis (Castor bean).